We begin with the raw amino-acid sequence, 185 residues long: Probable host range protein 2 (185 aa).

Belongs to the poxviridae C7 protein family.

Plays a role for multiplication of the virus in different cell types. The chain is Probable host range protein 2 from Swinepox virus (strain Kasza) (SWPV).